A 480-amino-acid polypeptide reads, in one-letter code: 6-phosphogluconate dehydrogenase, decarboxylating (480 aa).

Residues 11–16, 34–36, 76–78, and Asn104 contribute to the NADP(+) site; these read GLAVMG, NRS, and IKA. Substrate-binding positions include Asn104 and 130-132; that span reads SGG. The active-site Proton acceptor is Lys184. Residue 187-188 coordinates substrate; the sequence is HN. Glu191 functions as the Proton donor in the catalytic mechanism. Residues Tyr192, Lys261, Arg288, Arg448, and His454 each coordinate substrate.

Belongs to the 6-phosphogluconate dehydrogenase family. In terms of assembly, homodimer.

The enzyme catalyses 6-phospho-D-gluconate + NADP(+) = D-ribulose 5-phosphate + CO2 + NADPH. The protein operates within carbohydrate degradation; pentose phosphate pathway; D-ribulose 5-phosphate from D-glucose 6-phosphate (oxidative stage): step 3/3. In terms of biological role, catalyzes the oxidative decarboxylation of 6-phosphogluconate to ribulose 5-phosphate and CO(2), with concomitant reduction of NADP to NADPH. This chain is 6-phosphogluconate dehydrogenase, decarboxylating (gnd), found in Chlamydia trachomatis serovar D (strain ATCC VR-885 / DSM 19411 / UW-3/Cx).